We begin with the raw amino-acid sequence, 434 residues long: A-adding tRNA nucleotidyltransferase (434 aa).

20-23 (GAVR) contributes to the ATP binding site. D33 and D35 together coordinate Mg(2+). ATP is bound by residues 91 to 92 (RD), N96, 132 to 141 (DPLRAWRAAR), and R177. Positions 227–339 (VFEHGVEALH…ELLPDLLSLM (113 aa)) constitute an HD domain.

The protein belongs to the tRNA nucleotidyltransferase/poly(A) polymerase family. Requires Mg(2+) as cofactor.

The catalysed reaction is a tRNA with a 3' CC end + ATP = a tRNA with a 3' CCA end + diphosphate. Functionally, tRNA nucleotidyltransferase involved in the synthesis of the tRNA CCA terminus. Adds the terminal adenosine residue to tRNA. This Deinococcus radiodurans (strain ATCC 13939 / DSM 20539 / JCM 16871 / CCUG 27074 / LMG 4051 / NBRC 15346 / NCIMB 9279 / VKM B-1422 / R1) protein is A-adding tRNA nucleotidyltransferase.